A 152-amino-acid chain; its full sequence is 3-hydroxyacyl-[acyl-carrier-protein] dehydratase FabZ (152 aa).

The active site involves His-54.

This sequence belongs to the thioester dehydratase family. FabZ subfamily.

The protein localises to the cytoplasm. It catalyses the reaction a (3R)-hydroxyacyl-[ACP] = a (2E)-enoyl-[ACP] + H2O. Involved in unsaturated fatty acids biosynthesis. Catalyzes the dehydration of short chain beta-hydroxyacyl-ACPs and long chain saturated and unsaturated beta-hydroxyacyl-ACPs. This chain is 3-hydroxyacyl-[acyl-carrier-protein] dehydratase FabZ, found in Shewanella woodyi (strain ATCC 51908 / MS32).